The following is a 142-amino-acid chain: Large ribosomal subunit protein uL11 (142 aa).

Belongs to the universal ribosomal protein uL11 family. In terms of assembly, part of the ribosomal stalk of the 50S ribosomal subunit. Interacts with L10 and the large rRNA to form the base of the stalk. L10 forms an elongated spine to which L12 dimers bind in a sequential fashion forming a multimeric L10(L12)X complex. In terms of processing, one or more lysine residues are methylated.

Functionally, forms part of the ribosomal stalk which helps the ribosome interact with GTP-bound translation factors. This chain is Large ribosomal subunit protein uL11, found in Leptospira interrogans serogroup Icterohaemorrhagiae serovar copenhageni (strain Fiocruz L1-130).